Reading from the N-terminus, the 683-residue chain is Methionine--tRNA ligase (683 aa).

The 'HIGH' region signature appears at 15–25; the sequence is YYPSGKLHIGN. The 'KMSKS' region motif lies at 311–315; it reads KMSKS. Lysine 314 contributes to the ATP binding site. One can recognise a tRNA-binding domain in the interval 581 to 683; the sequence is DFDKVELKVA…DNMVNGSLIS (103 aa).

The protein belongs to the class-I aminoacyl-tRNA synthetase family. MetG type 2B subfamily. In terms of assembly, homodimer.

It is found in the cytoplasm. It carries out the reaction tRNA(Met) + L-methionine + ATP = L-methionyl-tRNA(Met) + AMP + diphosphate. Functionally, is required not only for elongation of protein synthesis but also for the initiation of all mRNA translation through initiator tRNA(fMet) aminoacylation. This chain is Methionine--tRNA ligase, found in Lactiplantibacillus plantarum (strain ATCC BAA-793 / NCIMB 8826 / WCFS1) (Lactobacillus plantarum).